A 156-amino-acid chain; its full sequence is Calmodulin (156 aa).

An N-acetylserine modification is found at S2. 4 consecutive EF-hand domains span residues 15–50, 51–86, 88–123, and 124–156; these read EQIA…LGQN, PTEA…KMKD, DSEE…LGEK, and LTDE…MTSK. D28, D30, D32, T34, E39, D64, D66, N68, T70, E75, D101, D103, N105, and E112 together coordinate Ca(2+). Position 123 is an N6,N6,N6-trimethyllysine (K123). Positions 137, 139, 141, 143, and 148 each coordinate Ca(2+).

The protein belongs to the calmodulin family.

Its function is as follows. Calmodulin mediates the control of a large number of enzymes, ion channels and other proteins by Ca(2+). Among the enzymes to be stimulated by the calmodulin-Ca(2+) complex are a number of protein kinases and phosphatases. This chain is Calmodulin, found in Strongylocentrotus intermedius (Sea urchin).